A 200-amino-acid polypeptide reads, in one-letter code: ATP synthase subunit s, mitochondrial (200 aa).

A mitochondrion-targeting transit peptide spans 1–25 (MMLFGKISQQLCGLKKLPWSRDSRY). The N-terminal domain stretch occupies residues 1–61 (MMLFGKISQQ…SEWLLRCGAM (61 aa)). Residue Gly59 participates in Mg(2+) binding. 4 LRR repeats span residues 62-87 (VRYHGQQRWQKDYNHLPTGPLDKYKI), 88-116 (QAIDATDSCIMSIGFDHMEGLQYVEKIRL), 117-141 (CKCHYIEDGCLERLSQLENLQKSML), and 142-173 (EMEIISCGNVTDKGIIALHHFRNLKYLFLSDL). Thr93 serves as a coordination point for Mg(2+).

The protein belongs to the ATP synthase subunit s family. As to quaternary structure, homotetramer. Associates with ATP synthase.

It is found in the mitochondrion. The protein resides in the mitochondrion inner membrane. Its function is as follows. Involved in regulation of mitochondrial membrane ATP synthase. Necessary for H(+) conduction of ATP synthase. Facilitates energy-driven catalysis of ATP synthesis by blocking a proton leak through an alternative proton exit pathway. The chain is ATP synthase subunit s, mitochondrial (DMAC2L) from Bos taurus (Bovine).